We begin with the raw amino-acid sequence, 285 residues long: Probable adenylate kinase 6, chloroplastic (285 aa).

The N-terminal 33 residues, 1–33, are a transit peptide targeting the chloroplast; it reads MAAISRAIRACAAAGSRRSMASSAKEVAAAGAR. Residue 63-68 coordinates ATP; sequence GVGKGT. The interval 83–112 is NMP; that stretch reads ATGDLVRDALASPGPFSEQLAEIVNNGKLV. Residues Thr-84, Arg-89, 110–112, 140–143, and Gln-147 each bind AMP; these read KLV and GFPR. The tract at residues 176–224 is LID; sequence GRRMCSQCGGNFNVASIDMEGENGGPRMYMPPLLPPPQCESKLITRPDD. Residues Arg-177 and 186–187 contribute to the ATP site; that span reads NF. Positions 221 and 232 each coordinate AMP.

It belongs to the adenylate kinase family.

Its subcellular location is the plastid. The protein resides in the chloroplast. It catalyses the reaction AMP + ATP = 2 ADP. Its function is as follows. Catalyzes the reversible transfer of the terminal phosphate group between ATP and AMP. Plays an important role in cellular energy homeostasis and in adenine nucleotide metabolism. The sequence is that of Probable adenylate kinase 6, chloroplastic from Oryza sativa subsp. japonica (Rice).